The sequence spans 205 residues: GTP cyclohydrolase-2 (205 aa).

49–53 (RIHSE) contacts GTP. C54, C65, and C67 together coordinate Zn(2+). GTP contacts are provided by residues Q70, 92–94 (EGR), and T114. The active-site Proton acceptor is the D126. Residue R128 is the Nucleophile of the active site. GTP-binding residues include T149 and K154.

This sequence belongs to the GTP cyclohydrolase II family. It depends on Zn(2+) as a cofactor.

The enzyme catalyses GTP + 4 H2O = 2,5-diamino-6-hydroxy-4-(5-phosphoribosylamino)-pyrimidine + formate + 2 phosphate + 3 H(+). The protein operates within cofactor biosynthesis; riboflavin biosynthesis; 5-amino-6-(D-ribitylamino)uracil from GTP: step 1/4. In terms of biological role, catalyzes the conversion of GTP to 2,5-diamino-6-ribosylamino-4(3H)-pyrimidinone 5'-phosphate (DARP), formate and pyrophosphate. The sequence is that of GTP cyclohydrolase-2 from Shewanella sediminis (strain HAW-EB3).